The following is a 190-amino-acid chain: Nascent polypeptide-associated complex subunit alpha (190 aa).

Disordered regions lie at residues phenylalanine 20 to lysine 42 and serine 123 to lysine 155. The span at histidine 30–glutamate 40 shows a compositional bias: basic and acidic residues. Residues serine 37–alanine 102 form the NAC-A/B domain. Residues glutamate 138–glycine 151 show a composition bias toward acidic residues. The UBA domain occupies valine 152–alanine 189.

It belongs to the NAC-alpha family. As to quaternary structure, part of the nascent polypeptide-associated complex (NAC), consisting of EGD2 and EGD1. NAC associates with ribosomes via EGD1.

The protein resides in the cytoplasm. It is found in the nucleus. Component of the nascent polypeptide-associated complex (NAC), a dynamic component of the ribosomal exit tunnel, protecting the emerging polypeptides from interaction with other cytoplasmic proteins to ensure appropriate nascent protein targeting. The NAC complex also promotes mitochondrial protein import by enhancing productive ribosome interactions with the outer mitochondrial membrane and blocks the inappropriate interaction of ribosomes translating non-secretory nascent polypeptides with translocation sites in the membrane of the endoplasmic reticulum. EGD2 may also be involved in transcription regulation. The protein is Nascent polypeptide-associated complex subunit alpha (EGD2) of Mycosarcoma maydis (Corn smut fungus).